A 290-amino-acid chain; its full sequence is 33 kDa chaperonin (290 aa).

2 disulfide bridges follow: Cys-235/Cys-237 and Cys-268/Cys-271.

Belongs to the HSP33 family. Post-translationally, under oxidizing conditions two disulfide bonds are formed involving the reactive cysteines. Under reducing conditions zinc is bound to the reactive cysteines and the protein is inactive.

The protein resides in the cytoplasm. In terms of biological role, redox regulated molecular chaperone. Protects both thermally unfolding and oxidatively damaged proteins from irreversible aggregation. Plays an important role in the bacterial defense system toward oxidative stress. This chain is 33 kDa chaperonin, found in Streptococcus pyogenes serotype M28 (strain MGAS6180).